A 145-amino-acid chain; its full sequence is Large ribosomal subunit protein uL15 (145 aa).

A compositionally biased stretch (basic residues) spans Met-1–Gly-13. Residues Met-1–Trp-44 are disordered.

It belongs to the universal ribosomal protein uL15 family. As to quaternary structure, part of the 50S ribosomal subunit.

Functionally, binds to the 23S rRNA. The protein is Large ribosomal subunit protein uL15 of Methanobrevibacter smithii (strain ATCC 35061 / DSM 861 / OCM 144 / PS).